The chain runs to 540 residues: Chaperonin GroEL 2 (540 aa).

ATP contacts are provided by residues 29–32 (TLGP), 86–90 (DGTTT), G413, 476–478 (NAA), and D492.

It belongs to the chaperonin (HSP60) family. In terms of assembly, forms a cylinder of 14 subunits composed of two heptameric rings stacked back-to-back. Interacts with the co-chaperonin GroES.

The protein localises to the cytoplasm. It carries out the reaction ATP + H2O + a folded polypeptide = ADP + phosphate + an unfolded polypeptide.. Functionally, together with its co-chaperonin GroES, plays an essential role in assisting protein folding. The GroEL-GroES system forms a nano-cage that allows encapsulation of the non-native substrate proteins and provides a physical environment optimized to promote and accelerate protein folding. The protein is Chaperonin GroEL 2 of Streptomyces albus G.